The chain runs to 650 residues: Solute carrier family 23 member 2 (650 aa).

Residues 1 to 20 (MMGIGKNTTSKSMEAGSSTE) show a composition bias toward polar residues. The disordered stretch occupies residues 1–21 (MMGIGKNTTSKSMEAGSSTEG). Residues 9-110 (TSKSMEAGSS…LCIFLGLQHY (102 aa)) lie on the Cytoplasmic side of the membrane. The residue at position 70 (Ser-70) is a Phosphoserine. A Phosphothreonine modification is found at Thr-75. Ser-78 is subject to Phosphoserine. A Phosphothreonine modification is found at Thr-79. Ser-81 bears the Phosphoserine mark. The chain crosses the membrane as a helical span at residues 111–131 (LTCFSGTIAVPFLLADAMCVG). Over 132-139 (YDQWATSQ) the chain is Extracellular. The helical transmembrane segment at 140–160 (LIGTIFFCVGITTLLQTTFGC) threads the bilayer. A topological domain (cytoplasmic) is located at residue Arg-161. The helical transmembrane segment at 162-182 (LPLFQASAFAFLAPARAILSL) threads the bilayer. Over 183 to 218 (DKWKCNTTDVSVANGTAELLHTEHIWYPRIREIQGA) the chain is Extracellular. N-linked (GlcNAc...) asparagine glycans are attached at residues Asn-188 and Asn-196. The helical transmembrane segment at 219–239 (IIMSSLIEVVIGLLGLPGALL) threads the bilayer. Residues 240–266 (KYIGPLTITPTVALIGLSGFQAAGERA) are Cytoplasmic-facing. Residues 267 to 284 (GKHWGIAMLTIFLVLLFS) form a helical membrane-spanning segment. The Extracellular segment spans residues 285-288 (QYAR). The segment at residues 289-302 (NVKFPLPIYKSKKG) is an intramembrane region (helical). Residues 303–309 (WTAYKLQ) lie on the Extracellular side of the membrane. Residues 310–330 (LFKMFPIILAILVSWLLCFIF) form a helical membrane-spanning segment. The Cytoplasmic portion of the chain corresponds to 331-371 (TVTDVFPPDSTKYGFYARTDARQGVLLVAPWFKVPYPFQWG). Residues 372–392 (LPTVSAAGVIGMLSAVVASII) form a helical membrane-spanning segment. The Extracellular segment spans residues 393–417 (ESIGDYYACARLSCAPPPPIHAINR). Residues 418-438 (GIFVEGLSCVLDGIFGTGNGS) traverse the membrane as a helical segment. Residues 439–461 (TSSSPNIGVLGITKVGSRRVIQC) lie on the Cytoplasmic side of the membrane. The chain crosses the membrane as a helical span at residues 462–482 (GAALMLALGMIGKFSALFASL). Topologically, residues 483–485 (PDP) are extracellular. A helical transmembrane segment spans residues 486 to 506 (VLGALFCTLFGMITAVGLSNL). Topologically, residues 507 to 516 (QFIDLNSSRN) are cytoplasmic. A helical transmembrane segment spans residues 517 to 537 (LFVLGFSIFFGLVLPSYLRQN). The Extracellular segment spans residues 538 to 547 (PLVTGITGID). The helical transmembrane segment at 548–568 (QVLNVLLTTAMFVGGCVAFIL) threads the bilayer. Residues 569-650 (DNTIPGTPEE…SSDEDSQATG (82 aa)) lie on the Cytoplasmic side of the membrane. Thr-649 bears the Phosphothreonine mark.

Belongs to the nucleobase:cation symporter-2 (NCS2) (TC 2.A.40) family. Interacts with CLSTN3. Post-translationally, phosphorylated. As to expression, ubiquitous.

The protein localises to the cell membrane. The enzyme catalyses L-ascorbate(out) + 2 Na(+)(out) = L-ascorbate(in) + 2 Na(+)(in). Its function is as follows. Sodium/ascorbate cotransporter. Mediates electrogenic uptake of vitamin C, with a stoichiometry of 2 Na(+) for each ascorbate. The sequence is that of Solute carrier family 23 member 2 (SLC23A2) from Homo sapiens (Human).